The sequence spans 273 residues: Chondrolectin (273 aa).

The signal sequence occupies residues 1 to 21 (MSRVVSLLLGAALLCGHGAFC). Over 22-216 (RRVVSGQKVC…VVTEAGIIPN (195 aa)) the chain is Extracellular. The 145-residue stretch at 35-179 (FKHPCYKMAY…CNMKHNYICK (145 aa)) folds into the C-type lectin domain. 2 disulfides stabilise this stretch: cysteine 61-cysteine 178 and cysteine 144-cysteine 170. Asparagine 86 carries an N-linked (GlcNAc...) asparagine glycan. A helical transmembrane segment spans residues 217 to 237 (LIYVVIPTIPLLLLILVAFGT). Topologically, residues 238 to 273 (CCFQMLHKSKGRTKTSPNQSTLWISKSTRKESGMEV) are cytoplasmic. Residues 248–273 (GRTKTSPNQSTLWISKSTRKESGMEV) form a disordered region. Polar residues predominate over residues 251–263 (KTSPNQSTLWISK).

As to quaternary structure, interacts with RABGGTB. Post-translationally, N-glycosylated. As to expression, found in spleen, testis, prostate and fetal liver. Expression limited to vascular muscle of testis, smooth muscle of prostate stroma, heart muscle, skeletal muscle, crypts of small intestine, and red pulp of spleen. B lymphocytes express isoform 2 only; peripheral blood T lymphocytes express isoform 3 only; granulocytes and monocytes express neither isoform 2 nor isoform 3. During development of T lymphocytes, bone marrow progenitor cells express isoform 2 only; thymocytes at different stages of maturation express predominantly isoform 2 and weakly isoform 3, and mature thymocytes express only isoform 2.

It is found in the cytoplasm. The protein resides in the membrane. Its subcellular location is the endoplasmic reticulum. It localises to the endoplasmic reticulum membrane. Its function is as follows. May play a role in the development of the nervous system such as in neurite outgrowth and elongation. May be involved in motor axon growth and guidance. The polypeptide is Chondrolectin (CHODL) (Homo sapiens (Human)).